The chain runs to 318 residues: Ribosomal RNA small subunit methyltransferase H (318 aa).

S-adenosyl-L-methionine is bound by residues 34–36 (GGH), aspartate 57, leucine 91, aspartate 110, and glutamine 117.

The protein belongs to the methyltransferase superfamily. RsmH family.

Its subcellular location is the cytoplasm. It carries out the reaction cytidine(1402) in 16S rRNA + S-adenosyl-L-methionine = N(4)-methylcytidine(1402) in 16S rRNA + S-adenosyl-L-homocysteine + H(+). Specifically methylates the N4 position of cytidine in position 1402 (C1402) of 16S rRNA. The polypeptide is Ribosomal RNA small subunit methyltransferase H (Chlorobaculum parvum (strain DSM 263 / NCIMB 8327) (Chlorobium vibrioforme subsp. thiosulfatophilum)).